The sequence spans 315 residues: Putative HTH-type transcriptional regulatory protein PF1851 (315 aa).

The HTH cro/C1-type domain maps to leucine 131–phenylalanine 189. A DNA-binding region (H-T-H motif) is located at residues threonine 142 to lysine 161.

The sequence is that of Putative HTH-type transcriptional regulatory protein PF1851 from Pyrococcus furiosus (strain ATCC 43587 / DSM 3638 / JCM 8422 / Vc1).